The primary structure comprises 441 residues: Glutamate--tRNA ligase 1 (441 aa).

The 'HIGH' region signature appears at Pro-9–Asn-19. A 'KMSKS' region motif is present at residues Ala-239–Arg-243. Position 242 (Lys-242) interacts with ATP.

It belongs to the class-I aminoacyl-tRNA synthetase family. Glutamate--tRNA ligase type 1 subfamily. Monomer.

It is found in the cytoplasm. The catalysed reaction is tRNA(Glu) + L-glutamate + ATP = L-glutamyl-tRNA(Glu) + AMP + diphosphate. In terms of biological role, catalyzes the attachment of glutamate to tRNA(Glu) in a two-step reaction: glutamate is first activated by ATP to form Glu-AMP and then transferred to the acceptor end of tRNA(Glu). This is Glutamate--tRNA ligase 1 from Cereibacter sphaeroides (strain ATCC 17025 / ATH 2.4.3) (Rhodobacter sphaeroides).